The following is a 334-amino-acid chain: Antho-RFamide neuropeptides (334 aa).

A signal peptide spans 1-26 (MLVAMTTASYVTILVTLLFHILTINA). A propeptide spanning residues 27–116 (KTVTKRAKET…REFQGRFGRE (90 aa)) is cleaved from the precursor. Basic and acidic residues-rich tracts occupy residues 115-289 (REQG…RELL) and 303-334 (PQTR…ANKS). The segment at 115–334 (REQGRFGREE…ESNDEEANKS (220 aa)) is disordered. Phe120 carries the phenylalanine amide modification. A propeptide spanning residues 122-125 (REED) is cleaved from the precursor. A Phenylalanine amide modification is found at Phe129. Residues 131–134 (REED) constitute a propeptide that is removed on maturation. Phe138 bears the Phenylalanine amide mark. The propeptide occupies 140–142 (REE). At Phe146 the chain carries Phenylalanine amide. A propeptide spanning residues 148 to 151 (REED) is cleaved from the precursor. Residue Phe155 is modified to Phenylalanine amide. The propeptide occupies 157–160 (REED). Phe164 bears the Phenylalanine amide mark. A propeptide spanning residues 166-169 (REED) is cleaved from the precursor. The residue at position 173 (Phe173) is a Phenylalanine amide. The propeptide occupies 175 to 178 (REEE). A Phenylalanine amide modification is found at Phe182. The propeptide occupies 184–187 (REED). Position 191 is a phenylalanine amide (Phe191). Positions 193–196 (REEE) are excised as a propeptide. At Phe200 the chain carries Phenylalanine amide. The propeptide occupies 202 to 205 (REED). Phe209 is subject to Phenylalanine amide. A propeptide spanning residues 211 to 214 (REED) is cleaved from the precursor. Phe218 carries the phenylalanine amide modification. Positions 220–223 (REEE) are excised as a propeptide. Position 227 is a phenylalanine amide (Phe227). Residues 229–233 (KRDED) constitute a propeptide that is removed on maturation. Position 237 is a phenylalanine amide (Phe237). A propeptide spanning residues 239–242 (KRED) is cleaved from the precursor. Phe246 carries the phenylalanine amide modification. The propeptide occupies 248 to 252 (KRDED). Phe256 is subject to Phenylalanine amide. Positions 258-262 (KRDED) are excised as a propeptide. Phe266 is modified (phenylalanine amide). A propeptide spanning residues 268–271 (KRED) is cleaved from the precursor. Phenylalanine amide is present on Phe275. A propeptide spanning residues 277–280 (KRED) is cleaved from the precursor. Phe284 bears the Phenylalanine amide mark. A propeptide spanning residues 286 to 334 (RELLAKLNKRTTSIQEDPQTRFRDVQMTRRNVAKKDKIEESNDEEANKS) is cleaved from the precursor.

Belongs to the FARP (FMRFamide related peptide) family. In terms of tissue distribution, neurons associated with smooth muscle fibers.

The protein resides in the secreted. In terms of biological role, not known but it could act as a transmitter at neuromuscular synapses. The protein is Antho-RFamide neuropeptides of Calliactis parasitica (Sea anemone).